A 451-amino-acid chain; its full sequence is Chromosomal replication initiator protein DnaA (451 aa).

Positions 1–77 (MTENEQIFWN…EVYNAQISVD (77 aa)) are domain I, interacts with DnaA modulators. The tract at residues 77 to 110 (DYVFEEDLMIEQNQTKINQKPKQQALNSLPTVTS) is domain II. A domain III, AAA+ region region spans residues 111–329 (DLNPKYSFEN…GALKDISLVA (219 aa)). 4 residues coordinate ATP: Gly155, Gly157, Lys158, and Thr159. Residues 330-451 (NFKQIDTITV…EIETIKNKIK (122 aa)) are domain IV, binds dsDNA.

Belongs to the DnaA family. As to quaternary structure, oligomerizes as a right-handed, spiral filament on DNA at oriC.

It localises to the cytoplasm. In terms of biological role, plays an essential role in the initiation and regulation of chromosomal replication. ATP-DnaA binds to the origin of replication (oriC) to initiate formation of the DNA replication initiation complex once per cell cycle. Binds the DnaA box (a 9 base pair repeat at the origin) and separates the double-stranded (ds)DNA. Forms a right-handed helical filament on oriC DNA; dsDNA binds to the exterior of the filament while single-stranded (ss)DNA is stabiized in the filament's interior. The ATP-DnaA-oriC complex binds and stabilizes one strand of the AT-rich DNA unwinding element (DUE), permitting loading of DNA polymerase. After initiation quickly degrades to an ADP-DnaA complex that is not apt for DNA replication. Binds acidic phospholipids. The chain is Chromosomal replication initiator protein DnaA from Streptococcus pyogenes serotype M4 (strain MGAS10750).